An 88-amino-acid chain; its full sequence is Small ribosomal subunit protein bS20 (88 aa).

It belongs to the bacterial ribosomal protein bS20 family.

Binds directly to 16S ribosomal RNA. The chain is Small ribosomal subunit protein bS20 from Natranaerobius thermophilus (strain ATCC BAA-1301 / DSM 18059 / JW/NM-WN-LF).